We begin with the raw amino-acid sequence, 1528 residues long: Mitogen-activated protein kinase kinae kinase MCK1 (1528 aa).

The segment covering 1–11 (MYPGSSQSRPY) has biased composition (low complexity). Disordered regions lie at residues 1 to 84 (MYPG…PAPR), 109 to 208 (ATAP…VPGI), 303 to 418 (VHAR…NNVR), 449 to 481 (INGR…KLPF), 607 to 652 (VKPP…EARL), 695 to 731 (GKPV…APSA), 746 to 786 (VQGS…SQPM), 811 to 929 (SANN…SDDG), 943 to 1012 (KKAK…EDGK), and 1086 to 1191 (ATPL…ALLR). Residues 12 to 21 (QVPPPPPMSP) show a composition bias toward pro residues. A compositionally biased stretch (low complexity) spans 22-31 (PLSQMHQQMS). The segment covering 53 to 64 (APPPPPPGPPPA) has biased composition (pro residues). The span at 157–173 (SSQTWQTTSSSSTNTAS) shows a compositional bias: low complexity. 3 stretches are compositionally biased toward polar residues: residues 174 to 183 (VNDNVQSNAP), 191 to 205 (NNSA…SSNV), and 318 to 327 (HGRQGSINSR). Positions 328-337 (GNDKGTHDGS) are enriched in basic and acidic residues. Positions 338–363 (DSPNTPSSQSRSTTIPTFPDGSSFSN) are enriched in polar residues. The segment covering 396 to 408 (SSTPKSSTLSVSP) has biased composition (low complexity). Residues 409–418 (HSSRFGNNVR) show a composition bias toward polar residues. Polar residues-rich tracts occupy residues 613–622 (SQQSTWSAGD) and 630–641 (GTSSSMSRQQNT). 2 stretches are compositionally biased toward basic and acidic residues: residues 642 to 652 (LKDDQSEEARL) and 698 to 714 (VDFD…KNTD). Residues 846 to 860 (RSQTAGDLSPISQMP) show a composition bias toward polar residues. Residues 917–928 (QSDDDSGDDSDD) are compositionally biased toward acidic residues. Over residues 977 to 986 (VSFNSPQSAR) the composition is skewed to polar residues. The segment covering 1001-1012 (PKSDMWDSEDGK) has biased composition (basic and acidic residues). Residues 1086–1111 (ATPLNSLPPSRVQSMYNESDTLGSDE) show a composition bias toward polar residues. Residues 1142–1152 (SIREKARGAHE) are compositionally biased toward basic and acidic residues. Polar residues predominate over residues 1158 to 1188 (TQTSMAAPQGLSRSGGTPATETQPTQNNSSA). The Protein kinase domain occupies 1238–1507 (WFKGQLIGKG…NKLLSQHPFC (270 aa)). ATP is bound by residues 1244-1252 (IGKGTYGRV) and Lys-1267.

The protein belongs to the protein kinase superfamily. STE Ser/Thr protein kinase family. MAP kinase kinase kinase subfamily. In terms of assembly, interacts with the adapter protein MST50 and MIP11.

It catalyses the reaction L-seryl-[protein] + ATP = O-phospho-L-seryl-[protein] + ADP + H(+). The enzyme catalyses L-threonyl-[protein] + ATP = O-phospho-L-threonyl-[protein] + ADP + H(+). Mitogen-activated protein kinase kinase kinase; part of the MCK1-MKK2-MPS1 MAP kinase (MAPK) signal transduction cascade that is essential for appressorium formation, penetration and invasive growth. Beside its role in pathogenesis, the MPS1 cascade is active in conidiation and cellular stress responses. Targets downstream of the the MPS1-MAPK pathway include transcription factors MIG1 and SWI6, as well as GSK1 and MPG1. The protein is Mitogen-activated protein kinase kinae kinase MCK1 of Pyricularia oryzae (strain 70-15 / ATCC MYA-4617 / FGSC 8958) (Rice blast fungus).